The chain runs to 222 residues: Charged multivesicular body protein 2a (222 aa).

N-acetylmethionine is present on Met-1. The stretch at 12–53 forms a coiled coil; it reads EELLRQNQRALNRAMRELDRERQKLETQEKKIIADIKKMAKQ. The interaction with VPS4B stretch occupies residues 56-222; that stretch reads MDAVRIMAKD…EERLKNLRRD (167 aa). Position 184 is a phosphoserine (Ser-184). Phosphothreonine is present on Thr-185. 3 positions are modified to phosphoserine: Ser-188, Ser-190, and Ser-203. Residues 195-222 are a coiled coil; the sequence is GKKAEAAASALADADADLEERLKNLRRD. The MIT-interacting motif signature appears at 210–220; the sequence is ADLEERLKNLR. The interaction with VTA1 stretch occupies residues 217–222; sequence KNLRRD.

It belongs to the SNF7 family. Probable core component of the endosomal sorting required for transport complex III (ESCRT-III). ESCRT-III components are thought to multimerize to form a flat lattice on the perimeter membrane of the endosome. Several assembly forms of ESCRT-III may exist that interact and act sequentially. In vitro, heteromerizes with CHMP3 (but not CHMP4) to form helical tubular structures that expose membrane-interacting sites on the outside whereas VPS4B can associate on the inside of the tubule. Interacts with CHMP1B, CHMP2B, CHMP3, CHMP4A, CHMP4B, CHMP4C and CHMP5. Interacts with VPS4A; the interaction is direct. Interacts with VPS4B; the interaction is direct. Interacts with MITD1. Interacts with VTA1; the interaction probably involves the open conformation of CHMP2A. In terms of processing, ISGylated in a CHMP5-dependent manner. Isgylation weakens and inhibits its interactions with VPS4A and VTA1 respectively.

It localises to the late endosome membrane. The protein localises to the nucleus envelope. In terms of biological role, probable core component of the endosomal sorting required for transport complex III (ESCRT-III) which is involved in multivesicular bodies (MVBs) formation and sorting of endosomal cargo proteins into MVBs. MVBs contain intraluminal vesicles (ILVs) that are generated by invagination and scission from the limiting membrane of the endosome and mostly are delivered to lysosomes enabling degradation of membrane proteins, such as stimulated growth factor receptors, lysosomal enzymes and lipids. The MVB pathway appears to require the sequential function of ESCRT-O, -I,-II and -III complexes. ESCRT-III proteins mostly dissociate from the invaginating membrane before the ILV is released. The ESCRT machinery also functions in topologically equivalent membrane fission events, such as the terminal stages of cytokinesis. Together with SPAST, the ESCRT-III complex promotes nuclear envelope sealing and mitotic spindle disassembly during late anaphase. Recruited to the reforming nuclear envelope (NE) during anaphase by LEMD2. ESCRT-III proteins are believed to mediate the necessary vesicle extrusion and/or membrane fission activities, possibly in conjunction with the AAA ATPase VPS4. (Microbial infection) The ESCRT machinery functions in topologically equivalent membrane fission events, such as the budding of enveloped viruses (HIV-1 and other lentiviruses). Involved in HIV-1 p6- and p9-dependent virus release. The protein is Charged multivesicular body protein 2a (CHMP2A) of Homo sapiens (Human).